We begin with the raw amino-acid sequence, 110 residues long: MEVAAKLSGARLSAQKARLVADQIRGKGVEDALDILAFSTKKGAQIIKKVLESAIANAEHNEGADVDELKVKTIFVDEGVSLKRIKPRAKGRADRITKRTCHITVKVADK.

This sequence belongs to the universal ribosomal protein uL22 family. Part of the 50S ribosomal subunit.

In terms of biological role, this protein binds specifically to 23S rRNA; its binding is stimulated by other ribosomal proteins, e.g. L4, L17, and L20. It is important during the early stages of 50S assembly. It makes multiple contacts with different domains of the 23S rRNA in the assembled 50S subunit and ribosome. The globular domain of the protein is located near the polypeptide exit tunnel on the outside of the subunit, while an extended beta-hairpin is found that lines the wall of the exit tunnel in the center of the 70S ribosome. The sequence is that of Large ribosomal subunit protein uL22 from Cellvibrio japonicus (strain Ueda107) (Pseudomonas fluorescens subsp. cellulosa).